Consider the following 512-residue polypeptide: Probable capsid protein 4 (512 aa).

The protein belongs to the NCLDV major capsid protein family.

The protein localises to the virion. The protein is Probable capsid protein 4 of Acanthamoeba polyphaga mimivirus (APMV).